The sequence spans 864 residues: Leucine--tRNA ligase (864 aa).

A 'HIGH' region motif is present at residues 42-52; the sequence is PYPSGKLHMGH. The 'KMSKS' region motif lies at 624–628; the sequence is KMSKS. Lysine 627 contacts ATP.

This sequence belongs to the class-I aminoacyl-tRNA synthetase family.

It localises to the cytoplasm. It catalyses the reaction tRNA(Leu) + L-leucine + ATP = L-leucyl-tRNA(Leu) + AMP + diphosphate. This is Leucine--tRNA ligase from Burkholderia ambifaria (strain ATCC BAA-244 / DSM 16087 / CCUG 44356 / LMG 19182 / AMMD) (Burkholderia cepacia (strain AMMD)).